We begin with the raw amino-acid sequence, 173 residues long: 6,7-dimethyl-8-ribityllumazine synthase (173 aa).

Residues Phe24, 58 to 60, and 82 to 84 contribute to the 5-amino-6-(D-ribitylamino)uracil site; these read ALE and AVI. Residue 87 to 88 participates in (2S)-2-hydroxy-3-oxobutyl phosphate binding; it reads ET. Catalysis depends on His90, which acts as the Proton donor. Residue Asn115 participates in 5-amino-6-(D-ribitylamino)uracil binding. Arg129 contacts (2S)-2-hydroxy-3-oxobutyl phosphate. The segment at 150–173 is disordered; it reads TLDQLSDDEEDEEDEDDEDEEERA. The segment covering 154–173 has biased composition (acidic residues); the sequence is LSDDEEDEEDEDDEDEEERA.

It belongs to the DMRL synthase family.

It carries out the reaction (2S)-2-hydroxy-3-oxobutyl phosphate + 5-amino-6-(D-ribitylamino)uracil = 6,7-dimethyl-8-(1-D-ribityl)lumazine + phosphate + 2 H2O + H(+). Its pathway is cofactor biosynthesis; riboflavin biosynthesis; riboflavin from 2-hydroxy-3-oxobutyl phosphate and 5-amino-6-(D-ribitylamino)uracil: step 1/2. Functionally, catalyzes the formation of 6,7-dimethyl-8-ribityllumazine by condensation of 5-amino-6-(D-ribitylamino)uracil with 3,4-dihydroxy-2-butanone 4-phosphate. This is the penultimate step in the biosynthesis of riboflavin. The polypeptide is 6,7-dimethyl-8-ribityllumazine synthase (Burkholderia mallei (strain NCTC 10247)).